Consider the following 93-residue polypeptide: Small ribosomal subunit protein uS19 (93 aa).

The protein belongs to the universal ribosomal protein uS19 family.

Protein S19 forms a complex with S13 that binds strongly to the 16S ribosomal RNA. The sequence is that of Small ribosomal subunit protein uS19 from Citrifermentans bemidjiense (strain ATCC BAA-1014 / DSM 16622 / JCM 12645 / Bem) (Geobacter bemidjiensis).